The chain runs to 913 residues: Eukaryotic translation initiation factor 3 subunit C (913 aa).

The segment at 1-22 (MSRFFANGSDSESESSEEEVQA) is disordered. Over residues 11 to 20 (SESESSEEEV) the composition is skewed to acidic residues. Residues S34, S165, S177, and S186 each carry the phosphoserine modification. The interval 157 to 285 (FREAPDQESD…KRAEDDEDGE (129 aa)) is disordered. Over residues 162–171 (DQESDVEEGE) the composition is skewed to acidic residues. Basic and acidic residues predominate over residues 172–184 (GEPHDSDGDRAGA). Acidic residues predominate over residues 214 to 239 (DEDDSDDSIDWDSDTESETESSEDEN). Positions 244 to 263 (MRERFLKRTTEKEDKDDDKR) are enriched in basic and acidic residues. A compositionally biased stretch (basic residues) spans 264–276 (KDKRKEQKHKVRK). The 177-residue stretch at 645-821 (FHMHINLELL…ETVVMHRSEP (177 aa)) folds into the PCI domain. The tract at residues 856-913 (RGNMGNRDRGYNRNQNNQGGNWGGQRRDNRNQRNRNQRGHHKQQQQQQQQQVQTIEEE) is disordered. Basic residues predominate over residues 887–898 (QRNRNQRGHHKQ).

This sequence belongs to the eIF-3 subunit C family. In terms of assembly, component of the eukaryotic translation initiation factor 3 (eIF-3) complex. The eIF-3 complex interacts with pix.

It is found in the cytoplasm. Its function is as follows. Component of the eukaryotic translation initiation factor 3 (eIF-3) complex, which is involved in protein synthesis of a specialized repertoire of mRNAs and, together with other initiation factors, stimulates binding of mRNA and methionyl-tRNAi to the 40S ribosome. The eIF-3 complex specifically targets and initiates translation of a subset of mRNAs involved in cell proliferation. The chain is Eukaryotic translation initiation factor 3 subunit C from Drosophila mojavensis (Fruit fly).